We begin with the raw amino-acid sequence, 602 residues long: Chaperone protein dnaK (602 aa).

This sequence belongs to the heat shock protein 70 family.

It localises to the plastid. The protein localises to the chloroplast. Functionally, acts as a chaperone. The sequence is that of Chaperone protein dnaK from Thalassiosira pseudonana (Marine diatom).